The primary structure comprises 362 residues: 3-dehydroquinate synthase (362 aa).

Residues 70–75, 104–108, 128–129, lysine 141, lysine 150, and 168–171 each bind NAD(+); these read EGEQYK, GVIGD, TT, and TLTT. Zn(2+)-binding residues include glutamate 183, histidine 246, and histidine 263.

It belongs to the sugar phosphate cyclases superfamily. Dehydroquinate synthase family. The cofactor is Co(2+). It depends on Zn(2+) as a cofactor. Requires NAD(+) as cofactor.

Its subcellular location is the cytoplasm. The enzyme catalyses 7-phospho-2-dehydro-3-deoxy-D-arabino-heptonate = 3-dehydroquinate + phosphate. It functions in the pathway metabolic intermediate biosynthesis; chorismate biosynthesis; chorismate from D-erythrose 4-phosphate and phosphoenolpyruvate: step 2/7. Its function is as follows. Catalyzes the conversion of 3-deoxy-D-arabino-heptulosonate 7-phosphate (DAHP) to dehydroquinate (DHQ). This is 3-dehydroquinate synthase from Histophilus somni (strain 129Pt) (Haemophilus somnus).